Consider the following 294-residue polypeptide: ATP synthase gamma chain (294 aa).

This sequence belongs to the ATPase gamma chain family. In terms of assembly, F-type ATPases have 2 components, CF(1) - the catalytic core - and CF(0) - the membrane proton channel. CF(1) has five subunits: alpha(3), beta(3), gamma(1), delta(1), epsilon(1). CF(0) has three main subunits: a, b and c.

It is found in the cell inner membrane. Functionally, produces ATP from ADP in the presence of a proton gradient across the membrane. The gamma chain is believed to be important in regulating ATPase activity and the flow of protons through the CF(0) complex. In Nitrosomonas europaea (strain ATCC 19718 / CIP 103999 / KCTC 2705 / NBRC 14298), this protein is ATP synthase gamma chain.